A 101-amino-acid polypeptide reads, in one-letter code: Putative septation protein SpoVG (101 aa).

The interval 82 to 101 (ELKKGGAAPARATGTDPHED) is disordered.

Belongs to the SpoVG family.

Functionally, could be involved in septation. In Anaeromyxobacter dehalogenans (strain 2CP-1 / ATCC BAA-258), this protein is Putative septation protein SpoVG.